Consider the following 65-residue polypeptide: Large ribosomal subunit protein uL29 (65 aa).

The protein belongs to the universal ribosomal protein uL29 family.

This Bacteroides fragilis (strain ATCC 25285 / DSM 2151 / CCUG 4856 / JCM 11019 / LMG 10263 / NCTC 9343 / Onslow / VPI 2553 / EN-2) protein is Large ribosomal subunit protein uL29.